We begin with the raw amino-acid sequence, 456 residues long: Histidine--tRNA ligase (456 aa).

Belongs to the class-II aminoacyl-tRNA synthetase family. As to quaternary structure, homodimer.

It is found in the cytoplasm. It catalyses the reaction tRNA(His) + L-histidine + ATP = L-histidyl-tRNA(His) + AMP + diphosphate + H(+). The sequence is that of Histidine--tRNA ligase from Borrelia garinii subsp. bavariensis (strain ATCC BAA-2496 / DSM 23469 / PBi) (Borreliella bavariensis).